The sequence spans 179 residues: Ribosome maturation factor RimM (179 aa).

The 76-residue stretch at E99 to L174 folds into the PRC barrel domain.

The protein belongs to the RimM family. As to quaternary structure, binds ribosomal protein uS19.

Its subcellular location is the cytoplasm. An accessory protein needed during the final step in the assembly of 30S ribosomal subunit, possibly for assembly of the head region. Essential for efficient processing of 16S rRNA. May be needed both before and after RbfA during the maturation of 16S rRNA. It has affinity for free ribosomal 30S subunits but not for 70S ribosomes. The protein is Ribosome maturation factor RimM of Natranaerobius thermophilus (strain ATCC BAA-1301 / DSM 18059 / JW/NM-WN-LF).